Here is a 120-residue protein sequence, read N- to C-terminus: Glycine cleavage system H protein (120 aa).

Positions 17–99 constitute a Lipoyl-binding domain; the sequence is VATVGITEHA…QGAAWFFKLK (83 aa). N6-lipoyllysine is present on lysine 58.

This sequence belongs to the GcvH family. In terms of assembly, the glycine cleavage system is composed of four proteins: P, T, L and H. Requires (R)-lipoate as cofactor.

In terms of biological role, the glycine cleavage system catalyzes the degradation of glycine. The H protein shuttles the methylamine group of glycine from the P protein to the T protein. The protein is Glycine cleavage system H protein of Sinorhizobium fredii (strain NBRC 101917 / NGR234).